Reading from the N-terminus, the 249-residue chain is Small ribosomal subunit protein eS6 (249 aa).

Positions 216-229 (RMKEAKEKRQEQIA) are enriched in basic and acidic residues. Residues 216–249 (RMKEAKEKRQEQIAKRRRLSSLRASTSKSESSQK) are disordered. Residues Ser235, Ser236, Ser240, Ser244, and Ser247 each carry the phosphoserine modification. The segment covering 236–249 (SLRASTSKSESSQK) has biased composition (low complexity).

It belongs to the eukaryotic ribosomal protein eS6 family. As to quaternary structure, component of the small ribosomal subunit. Part of the small subunit (SSU) processome, composed of more than 70 proteins and the RNA chaperone small nucleolar RNA (snoRNA) U3. Post-translationally, ribosomal protein S6 is the major substrate of protein kinases in eukaryote ribosomes. The phosphorylation is stimulated by growth factors, tumor promoting agents, and mitogens. It is dephosphorylated at growth arrest.

It localises to the cytoplasm. It is found in the nucleus. The protein localises to the nucleolus. Its function is as follows. Component of the 40S small ribosomal subunit. Plays an important role in controlling cell growth and proliferation through the selective translation of particular classes of mRNA. Part of the small subunit (SSU) processome, first precursor of the small eukaryotic ribosomal subunit. During the assembly of the SSU processome in the nucleolus, many ribosome biogenesis factors, an RNA chaperone and ribosomal proteins associate with the nascent pre-rRNA and work in concert to generate RNA folding, modifications, rearrangements and cleavage as well as targeted degradation of pre-ribosomal RNA by the RNA exosome. This Gallus gallus (Chicken) protein is Small ribosomal subunit protein eS6 (RPS6).